A 442-amino-acid polypeptide reads, in one-letter code: MDEESELIQPQDQSCWAFLPDLCLCRVFWWLGDRDRSRAALVCRKWNQMMYSAELWRYRTITFSGRPSRVHASEVESAVWYVKKFGRYLEHLEVKFMNPYNAVLTKKFQVTMRGLLSCLSKSNNRLKSLSIQYLELDRLVWRNSIRSSFISSLSFFLKKMGKRLDYLNLKGARLTVEQGCQILDSLSYMRNENVISELNIEDYFSHHLAVYNSPQFKKTMSTFHNLVSLNLNYNCISDELLENLCENASTLRTINIKCHVHDPHGQVIWGMSWAKLARQATNLKVNFFFERIMKYERLARILLQEIPIRSISLRSCYFSDPDCSMRPTLIDLLPTFRHTLQKLTCEFNNNHESLDEELHLLIISCRKLFYFKIWAFLDVSFVERILKSQKERQCALRVFKARIYTNRYETNEEDKTLQEIYRKYRKLIESELSYFVIVYSVM.

The F-box domain maps to 16 to 61 (WAFLPDLCLCRVFWWLGDRDRSRAALVCRKWNQMMYSAELWRYRTI).

In terms of assembly, directly interacts with SKP1 and CUL1.

In terms of biological role, substrate-recognition component of the SCF (SKP1-CUL1-F-box protein)-type E3 ubiquitin ligase complex. The sequence is that of F-box only protein 39 (FBXO39) from Homo sapiens (Human).